The primary structure comprises 358 residues: Methylthioribose-1-phosphate isomerase (358 aa).

Substrate is bound by residues 54 to 56 (RGA), R96, and Q205. The active-site Proton donor is the D246. 256-257 (NK) lines the substrate pocket.

Belongs to the eIF-2B alpha/beta/delta subunits family. MtnA subfamily.

The enzyme catalyses 5-(methylsulfanyl)-alpha-D-ribose 1-phosphate = 5-(methylsulfanyl)-D-ribulose 1-phosphate. It participates in amino-acid biosynthesis; L-methionine biosynthesis via salvage pathway; L-methionine from S-methyl-5-thio-alpha-D-ribose 1-phosphate: step 1/6. Functionally, catalyzes the interconversion of methylthioribose-1-phosphate (MTR-1-P) into methylthioribulose-1-phosphate (MTRu-1-P). The chain is Methylthioribose-1-phosphate isomerase from Pseudomonas paraeruginosa (strain DSM 24068 / PA7) (Pseudomonas aeruginosa (strain PA7)).